Here is a 185-residue protein sequence, read N- to C-terminus: Ribose 1,5-bisphosphate phosphokinase PhnN (185 aa).

10-17 is an ATP binding site; it reads GPSGSGKD.

Belongs to the ribose 1,5-bisphosphokinase family.

It carries out the reaction alpha-D-ribose 1,5-bisphosphate + ATP = 5-phospho-alpha-D-ribose 1-diphosphate + ADP. It participates in metabolic intermediate biosynthesis; 5-phospho-alpha-D-ribose 1-diphosphate biosynthesis; 5-phospho-alpha-D-ribose 1-diphosphate from D-ribose 5-phosphate (route II): step 3/3. Functionally, catalyzes the phosphorylation of ribose 1,5-bisphosphate to 5-phospho-D-ribosyl alpha-1-diphosphate (PRPP). In Escherichia coli O157:H7, this protein is Ribose 1,5-bisphosphate phosphokinase PhnN.